We begin with the raw amino-acid sequence, 343 residues long: GTPase Obg (343 aa).

The region spanning M1–L159 is the Obg domain. Positions A160–E334 constitute an OBG-type G domain. Residues G166–S173, F191–Y195, D213–G216, N284–D287, and S315–L317 each bind GTP. Mg(2+)-binding residues include S173 and T193.

Belongs to the TRAFAC class OBG-HflX-like GTPase superfamily. OBG GTPase family. In terms of assembly, monomer. Requires Mg(2+) as cofactor.

The protein localises to the cytoplasm. An essential GTPase which binds GTP, GDP and possibly (p)ppGpp with moderate affinity, with high nucleotide exchange rates and a fairly low GTP hydrolysis rate. Plays a role in control of the cell cycle, stress response, ribosome biogenesis and in those bacteria that undergo differentiation, in morphogenesis control. The sequence is that of GTPase Obg from Nitrosomonas eutropha (strain DSM 101675 / C91 / Nm57).